Reading from the N-terminus, the 303-residue chain is Sushi domain-containing protein 6 (303 aa).

The first 39 residues, 1–39 (MCHGRIAPKSTSVFAVASVGHGVFLPLVILCTLLGDGLA), serve as a signal peptide directing secretion. In terms of domain architecture, Sushi spans 40 to 104 (SVCPLPPEPE…KPAMEISCRL (65 aa)). Topologically, residues 40–120 (SVCPLPPEPE…HTSLGVPTLS (81 aa)) are extracellular. Intrachain disulfides connect C42–C89 and C74–C102. A helical transmembrane segment spans residues 121-141 (IVASTASSVALILLLVVLFVL). The Cytoplasmic segment spans residues 142–303 (LQPKLKSFHH…TDDIPLLKEA (162 aa)). Disordered regions lie at residues 199 to 237 (VLSE…GQSG) and 263 to 282 (GSGN…NSDI).

It is found in the membrane. May play a role in growth-suppressive activity and cell death. May be involved in the production of chemokine molecules in umbilical vein endothelial cells (HUVECs) cultured in THP1 monocyte LPS-induced medium. Plays a role in preventing tumor onset. In Homo sapiens (Human), this protein is Sushi domain-containing protein 6.